We begin with the raw amino-acid sequence, 101 residues long: Co-chaperonin GroES (101 aa).

It belongs to the GroES chaperonin family. Heptamer of 7 subunits arranged in a ring. Interacts with the chaperonin GroEL.

The protein resides in the cytoplasm. Its function is as follows. Together with the chaperonin GroEL, plays an essential role in assisting protein folding. The GroEL-GroES system forms a nano-cage that allows encapsulation of the non-native substrate proteins and provides a physical environment optimized to promote and accelerate protein folding. GroES binds to the apical surface of the GroEL ring, thereby capping the opening of the GroEL channel. The chain is Co-chaperonin GroES from Lawsonia intracellularis.